The chain runs to 369 residues: tRNA-specific 2-thiouridylase MnmA (369 aa).

ATP-binding positions include 12–19 (GMSGGVDS) and M38. The tract at residues 98 to 100 (NPD) is interaction with target base in tRNA. C103 functions as the Nucleophile in the catalytic mechanism. A disulfide bridge links C103 with C200. An ATP-binding site is contributed by G128. Residues 150 to 152 (KDQ) form an interaction with tRNA region. C200 acts as the Cysteine persulfide intermediate in catalysis. An interaction with tRNA region spans residues 312–313 (RY).

This sequence belongs to the MnmA/TRMU family.

It localises to the cytoplasm. The catalysed reaction is S-sulfanyl-L-cysteinyl-[protein] + uridine(34) in tRNA + AH2 + ATP = 2-thiouridine(34) in tRNA + L-cysteinyl-[protein] + A + AMP + diphosphate + H(+). Functionally, catalyzes the 2-thiolation of uridine at the wobble position (U34) of tRNA, leading to the formation of s(2)U34. In Tolumonas auensis (strain DSM 9187 / NBRC 110442 / TA 4), this protein is tRNA-specific 2-thiouridylase MnmA.